Reading from the N-terminus, the 275-residue chain is Large ribosomal subunit protein uL2c (275 aa).

A disordered region spans residues 224–275 (AMNPVDHPHGGGEGRTPIGRKKPVTPWGYSALGKKSRKRNRYSDASILRRRE).

It belongs to the universal ribosomal protein uL2 family. In terms of assembly, part of the 50S ribosomal subunit.

It is found in the plastid. It localises to the chloroplast. This Picea abies (Norway spruce) protein is Large ribosomal subunit protein uL2c (rpl2).